Reading from the N-terminus, the 211-residue chain is Dephospho-CoA kinase (211 aa).

The DPCK domain occupies 2-204; that stretch reads IIGLTGSIGM…SGVRRWRRGK (203 aa). 10–15 provides a ligand contact to ATP; that stretch reads GMGKST.

This sequence belongs to the CoaE family.

It is found in the cytoplasm. The enzyme catalyses 3'-dephospho-CoA + ATP = ADP + CoA + H(+). It functions in the pathway cofactor biosynthesis; coenzyme A biosynthesis; CoA from (R)-pantothenate: step 5/5. Functionally, catalyzes the phosphorylation of the 3'-hydroxyl group of dephosphocoenzyme A to form coenzyme A. The polypeptide is Dephospho-CoA kinase (Rhodospirillum rubrum (strain ATCC 11170 / ATH 1.1.1 / DSM 467 / LMG 4362 / NCIMB 8255 / S1)).